A 186-amino-acid chain; its full sequence is Small ribosomal subunit protein uS5 (186 aa).

In terms of domain architecture, S5 DRBM spans 20–83 (FVDKLVHINR…EAAKRDMIFV (64 aa)).

This sequence belongs to the universal ribosomal protein uS5 family. In terms of assembly, part of the 30S ribosomal subunit. Contacts proteins S4 and S8.

In terms of biological role, with S4 and S12 plays an important role in translational accuracy. Its function is as follows. Located at the back of the 30S subunit body where it stabilizes the conformation of the head with respect to the body. The protein is Small ribosomal subunit protein uS5 of Brucella abortus (strain S19).